The sequence spans 294 residues: ATP synthase gamma chain (294 aa).

Belongs to the ATPase gamma chain family. F-type ATPases have 2 components, CF(1) - the catalytic core - and CF(0) - the membrane proton channel. CF(1) has five subunits: alpha(3), beta(3), gamma(1), delta(1), epsilon(1). CF(0) has three main subunits: a, b and c.

The protein localises to the cell inner membrane. Produces ATP from ADP in the presence of a proton gradient across the membrane. The gamma chain is believed to be important in regulating ATPase activity and the flow of protons through the CF(0) complex. This is ATP synthase gamma chain from Nitrosomonas eutropha (strain DSM 101675 / C91 / Nm57).